A 293-amino-acid polypeptide reads, in one-letter code: Succinate--CoA ligase [ADP-forming] subunit alpha (293 aa).

CoA contacts are provided by residues 21-24 (TGKQ), lysine 47, and 99-101 (ITE). Tyrosine 162 provides a ligand contact to substrate. The active-site Tele-phosphohistidine intermediate is histidine 249.

This sequence belongs to the succinate/malate CoA ligase alpha subunit family. In terms of assembly, heterotetramer of two alpha and two beta subunits.

The catalysed reaction is succinate + ATP + CoA = succinyl-CoA + ADP + phosphate. The enzyme catalyses GTP + succinate + CoA = succinyl-CoA + GDP + phosphate. The protein operates within carbohydrate metabolism; tricarboxylic acid cycle; succinate from succinyl-CoA (ligase route): step 1/1. Functionally, succinyl-CoA synthetase functions in the citric acid cycle (TCA), coupling the hydrolysis of succinyl-CoA to the synthesis of either ATP or GTP and thus represents the only step of substrate-level phosphorylation in the TCA. The alpha subunit of the enzyme binds the substrates coenzyme A and phosphate, while succinate binding and nucleotide specificity is provided by the beta subunit. This is Succinate--CoA ligase [ADP-forming] subunit alpha from Methanothermobacter thermautotrophicus (strain ATCC 29096 / DSM 1053 / JCM 10044 / NBRC 100330 / Delta H) (Methanobacterium thermoautotrophicum).